Here is a 339-residue protein sequence, read N- to C-terminus: Heat-inducible transcription repressor HrcA (339 aa).

Belongs to the HrcA family.

Functionally, negative regulator of class I heat shock genes (grpE-dnaK-dnaJ and groELS operons). Prevents heat-shock induction of these operons. This is Heat-inducible transcription repressor HrcA from Nitrosospira multiformis (strain ATCC 25196 / NCIMB 11849 / C 71).